The sequence spans 359 residues: Trans-enoyl reductase mpsG (359 aa).

The NADP(+) site is built by Y212, L259, and T278.

This sequence belongs to the zinc-containing alcohol dehydrogenase family. As to quaternary structure, monomer.

It functions in the pathway secondary metabolite biosynthesis. Trans-enoyl reductase; part of the gene cluster that mediates the biosynthesis of macrophasetins, 3-decalinoyltetramic acids (DTAs) which feature a tetramate (pyrrolidine-2,4-dione) unit connected to a decalin fragment and that have potent bioactivities. The PKS-NRPS mpsA together with its associated enoylreductase partner mpsG incorporate one unit of acetyl-CoA, seven units of malonyl-CoA, and one unit of L-alanine to assemble the linear tetramic acid intermediate corresponding to the backbone of macrophasetins. Without the Diels-Alderase mpsD, the mpsA/G product can undergo the non-enzymatic intramolecular Diels-Alder (IMDA) reaction to generate both macrophasetin A and macrophasetin B. Catalyzed by mpsD, the linear tetramic acid intermediate is thoroughly converted to macrophasetin A via the endo-IMDA reaction in a regioselective and stereoselective manner. Finally, the cytochrome P450 monooxygenase mpsF catalyzes the hydroxylation at C20 to yield the end product macrophasetin C. The chain is Trans-enoyl reductase mpsG from Macrophomina phaseolina (strain MS6) (Charcoal rot fungus).